Consider the following 908-residue polypeptide: Protein translocase subunit SecA (908 aa).

Residues Gln-87, 105–109 (GEGKT), and Asp-512 each bind ATP. The segment at 865–908 (GGDDGSDEMMAHTPMIRDGDKVGRNDPCPCGSGRKYKQCHGKLS) is disordered. The span at 879–888 (MIRDGDKVGR) shows a compositional bias: basic and acidic residues. Zn(2+) is bound by residues Cys-892, Cys-894, Cys-903, and His-904. Basic residues predominate over residues 898–908 (RKYKQCHGKLS).

The protein belongs to the SecA family. As to quaternary structure, monomer and homodimer. Part of the essential Sec protein translocation apparatus which comprises SecA, SecYEG and auxiliary proteins SecDF-YajC and YidC. Requires Zn(2+) as cofactor.

Its subcellular location is the cell inner membrane. The protein resides in the cytoplasm. The catalysed reaction is ATP + H2O + cellular proteinSide 1 = ADP + phosphate + cellular proteinSide 2.. Part of the Sec protein translocase complex. Interacts with the SecYEG preprotein conducting channel. Has a central role in coupling the hydrolysis of ATP to the transfer of proteins into and across the cell membrane, serving both as a receptor for the preprotein-SecB complex and as an ATP-driven molecular motor driving the stepwise translocation of polypeptide chains across the membrane. The polypeptide is Protein translocase subunit SecA (Shewanella sp. (strain MR-7)).